The chain runs to 96 residues: Keratin-associated protein 12-3 (96 aa).

Repeat copies occupy residues 10 to 14 (CQPTC), 15 to 19 (CIHSP), 24 to 28 (CYVPV), 30 to 34 (CQSSV), 35 to 39 (CMPVS), 45 to 49 (CVAPS), 50 to 54 (CQPSV), 55 to 59 (CVPVS), 60 to 64 (CRPII), 70 to 74 (CQSSG), 75 to 79 (CCQPP), 80 to 84 (CTTAL), 85 to 89 (CRPIS), and 90 to 94 (CSTPS). The tract at residues 10-94 (CQPTCCIHSP…CRPISCSTPS (85 aa)) is 14 X 5 AA approximate repeats.

The protein belongs to the KRTAP type 12 family. In terms of assembly, interacts with hair keratins. Restricted to a narrow region of the hair fiber cuticle, lying approximately 20 cell layers above the apex of the dermal papilla of the hair root; not detected in any other tissues.

Functionally, in the hair cortex, hair keratin intermediate filaments are embedded in an interfilamentous matrix, consisting of hair keratin-associated proteins (KRTAP), which are essential for the formation of a rigid and resistant hair shaft through their extensive disulfide bond cross-linking with abundant cysteine residues of hair keratins. The matrix proteins include the high-sulfur and high-glycine-tyrosine keratins. This chain is Keratin-associated protein 12-3 (KRTAP12-3), found in Homo sapiens (Human).